A 110-amino-acid chain; its full sequence is UPF0213 protein DP2720 (110 aa).

In terms of domain architecture, GIY-YIG spans 12–88; that stretch reads PAWFVYIVQC…KQLSPTRKRT (77 aa).

This sequence belongs to the UPF0213 family.

The protein is UPF0213 protein DP2720 of Desulfotalea psychrophila (strain LSv54 / DSM 12343).